The sequence spans 554 residues: Rab GTPase-binding effector protein 2 (554 aa).

Residues methionine 1 to glutamine 15 are compositionally biased toward low complexity. 3 disordered regions span residues methionine 1–arginine 29, isoleucine 167–serine 250, and glutamate 375–leucine 395. The stretch at glutamine 15–glutamine 173 forms a coiled coil. Over residues glutamate 16–arginine 29 the composition is skewed to basic and acidic residues. Serine 176, serine 180, serine 187, and serine 191 each carry phosphoserine. The stretch at aspartate 274 to aspartate 512 forms a coiled coil. The span at leucine 377–glutamate 386 shows a compositional bias: polar residues.

This sequence belongs to the rabaptin family. In terms of assembly, heterodimer with RABGEF1. The dimer binds RAB5A that has been activated by GTP-binding. Interacts with SDCCAG8; this interaction is important for ciliogenesis regulation. Interacts with RAB4A; this interaction may mediate VEGFR2 cell surface expression.

It localises to the cytoplasm. The protein localises to the early endosome. The protein resides in the cytoskeleton. It is found in the microtubule organizing center. Its subcellular location is the centrosome. It localises to the cilium basal body. Its function is as follows. Plays a role in membrane trafficking and in homotypic early endosome fusion. Participates in arteriogenesis by regulating vascular endothelial growth factor receptor 2/VEGFR2 cell surface expression and endosomal trafficking. By interacting with SDCCAG8, localizes to centrosomes and plays a critical role in ciliogenesis. This chain is Rab GTPase-binding effector protein 2 (Rabep2), found in Rattus norvegicus (Rat).